The chain runs to 459 residues: Ribulose bisphosphate carboxylase (459 aa).

N111 contributes to the substrate binding site. K166 functions as the Proton acceptor in the catalytic mechanism. Substrate is bound at residue K168. Mg(2+) contacts are provided by K191, D193, and E194. N6-carboxylysine is present on K191. Residue H287 is the Proton acceptor of the active site. Residues R288, H321, and S368 each coordinate substrate.

The protein belongs to the RuBisCO large chain family. Type II subfamily. As to quaternary structure, homodimer. Requires Mg(2+) as cofactor.

It catalyses the reaction 2 (2R)-3-phosphoglycerate + 2 H(+) = D-ribulose 1,5-bisphosphate + CO2 + H2O. It carries out the reaction D-ribulose 1,5-bisphosphate + O2 = 2-phosphoglycolate + (2R)-3-phosphoglycerate + 2 H(+). Its function is as follows. RuBisCO catalyzes two reactions: the carboxylation of D-ribulose 1,5-bisphosphate, the primary event in carbon dioxide fixation, as well as the oxidative fragmentation of the pentose substrate. Both reactions occur simultaneously and in competition at the same active site. This chain is Ribulose bisphosphate carboxylase, found in Polaromonas naphthalenivorans (strain CJ2).